A 223-amino-acid chain; its full sequence is MAHDMYPNSPPRLTPDLLLRGYMAGIFPMAEARDDDAVFWVDPRQRGVLPLDGVHVSRKLRRFLARTEWTLSLNQDFAGVVAGCADRDETWINDQIFDAYTALHAMGFAHALEVREDGALIGGVYGVAIGTAFFGESMFSRRPNGSKVALVALCAHLRRCGYTLFDTQFVTPHLATMGAVEISRDSYRAQLRAALSAKADLTARPLPRTPAQIRAPGPGQPRS.

Belongs to the L/F-transferase family.

The protein resides in the cytoplasm. It carries out the reaction N-terminal L-lysyl-[protein] + L-leucyl-tRNA(Leu) = N-terminal L-leucyl-L-lysyl-[protein] + tRNA(Leu) + H(+). The enzyme catalyses N-terminal L-arginyl-[protein] + L-leucyl-tRNA(Leu) = N-terminal L-leucyl-L-arginyl-[protein] + tRNA(Leu) + H(+). The catalysed reaction is L-phenylalanyl-tRNA(Phe) + an N-terminal L-alpha-aminoacyl-[protein] = an N-terminal L-phenylalanyl-L-alpha-aminoacyl-[protein] + tRNA(Phe). Functions in the N-end rule pathway of protein degradation where it conjugates Leu, Phe and, less efficiently, Met from aminoacyl-tRNAs to the N-termini of proteins containing an N-terminal arginine or lysine. This Dinoroseobacter shibae (strain DSM 16493 / NCIMB 14021 / DFL 12) protein is Leucyl/phenylalanyl-tRNA--protein transferase.